We begin with the raw amino-acid sequence, 205 residues long: Large ribosomal subunit protein uL4 (205 aa).

Residues 53–77 form a disordered region; sequence RAAVRGGGRKPWKQKGTGRARAGSI. Over residues 59 to 70 the composition is skewed to basic residues; sequence GGRKPWKQKGTG.

It belongs to the universal ribosomal protein uL4 family. Part of the 50S ribosomal subunit.

In terms of biological role, one of the primary rRNA binding proteins, this protein initially binds near the 5'-end of the 23S rRNA. It is important during the early stages of 50S assembly. It makes multiple contacts with different domains of the 23S rRNA in the assembled 50S subunit and ribosome. Functionally, forms part of the polypeptide exit tunnel. This chain is Large ribosomal subunit protein uL4, found in Acidithiobacillus ferrooxidans (strain ATCC 23270 / DSM 14882 / CIP 104768 / NCIMB 8455) (Ferrobacillus ferrooxidans (strain ATCC 23270)).